A 397-amino-acid chain; its full sequence is DnaJ homolog subfamily A member 1 (397 aa).

One can recognise a J domain in the interval 6–68 (TYYDVLGVKP…KKRELYDKGG (63 aa)). Lys66 is modified (N6-acetyllysine). The residue at position 83 (Ser83) is a Phosphoserine. The segment at 121 to 205 (GATRKLALQK…CNGRKIVREK (85 aa)) adopts a CR-type zinc-finger fold. Zn(2+)-binding residues include Cys134, Cys137, Cys150, Cys153, Cys177, Cys180, Cys193, and Cys196. CXXCXGXG motif repeat units lie at residues 134-141 (CDKCEGRG), 150-157 (CPNCRGTG), 177-184 (CMECQGHG), and 193-200 (CKSCNGRK). Phosphoserine is present on Ser335. The segment at 352-397 (VEETDEMDQVELVDFDPNQERRRHYNGEAYEDDEHHPRGGVQCQTS) is disordered. Residues 353–365 (EETDEMDQVELVD) show a composition bias toward acidic residues. At Tyr381 the chain carries Phosphotyrosine. Cys394 is subject to Cysteine methyl ester. Cys394 is lipidated: S-farnesyl cysteine. A propeptide spans 395 to 397 (QTS) (removed in mature form).

As to quaternary structure, identified in a complex with HSPA1B and BAX. Interacts with RNF207.

It localises to the membrane. The protein resides in the cytoplasm. It is found in the microsome. Its subcellular location is the mitochondrion. The protein localises to the nucleus. It localises to the perinuclear region. In terms of biological role, co-chaperone for HSPA8/Hsc70. Plays a role in protein transport into mitochondria via its role as co-chaperone. Functions as co-chaperone for HSPA1B and negatively regulates the translocation of BAX from the cytosol to mitochondria in response to cellular stress, thereby protecting cells against apoptosis. Stimulates ATP hydrolysis, but not the folding of unfolded proteins mediated by HSPA1A (in vitro). Promotes apoptosis in response to cellular stress mediated by exposure to anisomycin or UV. This chain is DnaJ homolog subfamily A member 1 (DNAJA1), found in Bos taurus (Bovine).